The chain runs to 627 residues: UvrABC system protein C (627 aa).

The GIY-YIG domain maps to 26-105 (PSPGVYQFRN…IKELKPRYNV (80 aa)). One can recognise a UVR domain in the interval 219-254 (STMIRSLTSAMQLFARELKFERAAEIKMQLESLKRY).

It belongs to the UvrC family. In terms of assembly, interacts with UvrB in an incision complex.

It is found in the cytoplasm. Functionally, the UvrABC repair system catalyzes the recognition and processing of DNA lesions. UvrC both incises the 5' and 3' sides of the lesion. The N-terminal half is responsible for the 3' incision and the C-terminal half is responsible for the 5' incision. This Pelodictyon phaeoclathratiforme (strain DSM 5477 / BU-1) protein is UvrABC system protein C.